We begin with the raw amino-acid sequence, 90 residues long: Envelope glycoprotein N (90 aa).

Positions 1-21 (MTWKLFICFLSFGVIFLRVSS) are cleaved as a signal peptide. Over 22-55 (LTEKSHTTSYTILHNNNFYSNSCSADTYVPSIKT) the chain is Virion surface. The helical transmembrane segment at 56–76 (FSSVWAILNVIIFFCASLFYL) threads the bilayer. Over 77–90 (RHLCIVKFISNLTK) the chain is Intravirion.

The protein belongs to the herpesviridae glycoprotein N family. Interacts (via N-terminus) with gM (via N-terminus). The gM-gN heterodimer forms the gCII complex.

It localises to the virion membrane. Its subcellular location is the host membrane. It is found in the host Golgi apparatus. The protein resides in the host trans-Golgi network. Envelope glycoprotein necessary for proper maturation of gM and modulation of its membrane fusion activity. Also plays a critical role in virion morphogenesis. This is Envelope glycoprotein N from Saimiriine herpesvirus 2 (strain 11) (SaHV-2).